The following is a 1442-amino-acid chain: DNA-binding protein RFX7 (1442 aa).

The interval methionine 1–alanine 36 is disordered. A DNA-binding region (RFX-type winged-helix) is located at residues alanine 112 to alanine 187. A PxLPxI/L motif motif is present at residues proline 192–leucine 197. 3 disordered regions span residues methionine 406–serine 426, serine 485–serine 514, and serine 929–proline 1001. Over residues threonine 935–threonine 947 the composition is skewed to pro residues. The segment covering glycine 957–cysteine 995 has biased composition (polar residues).

It belongs to the RFX family.

The protein localises to the nucleus. Transcription factor. Acts as a transcriptional activator by binding to promoter regions of target genes. Plays a role in natural killer (NK) cell maintenance and immunity. Plays a role in the process of ciliogenesis in the neural tube and neural tube closure by regulating the expression of RFX4. The polypeptide is DNA-binding protein RFX7 (Xenopus laevis (African clawed frog)).